The following is a 141-amino-acid chain: 3-hydroxyacyl-[acyl-carrier-protein] dehydratase FabZ (141 aa).

The active site involves histidine 48.

The protein belongs to the thioester dehydratase family. FabZ subfamily.

The protein resides in the cytoplasm. It carries out the reaction a (3R)-hydroxyacyl-[ACP] = a (2E)-enoyl-[ACP] + H2O. Functionally, involved in unsaturated fatty acids biosynthesis. Catalyzes the dehydration of short chain beta-hydroxyacyl-ACPs and long chain saturated and unsaturated beta-hydroxyacyl-ACPs. The sequence is that of 3-hydroxyacyl-[acyl-carrier-protein] dehydratase FabZ from Herpetosiphon aurantiacus (strain ATCC 23779 / DSM 785 / 114-95).